We begin with the raw amino-acid sequence, 363 residues long: MAP kinase kinase skh1/pek1 (363 aa).

The 265-residue stretch at 79 to 343 folds into the Protein kinase domain; the sequence is ILYMNSLGEG…PQKMLTHPWV (265 aa). ATP-binding positions include 85–93 and lysine 108; that span reads LGEGVSGSV. The Proton acceptor role is filled by aspartate 206. Residue serine 234 is modified to Phosphoserine. A Phosphothreonine modification is found at threonine 238.

The protein belongs to the protein kinase superfamily. STE Ser/Thr protein kinase family. MAP kinase kinase subfamily.

The catalysed reaction is L-seryl-[protein] + ATP = O-phospho-L-seryl-[protein] + ADP + H(+). The enzyme catalyses L-threonyl-[protein] + ATP = O-phospho-L-threonyl-[protein] + ADP + H(+). It catalyses the reaction L-tyrosyl-[protein] + ATP = O-phospho-L-tyrosyl-[protein] + ADP + H(+). Activated by mkh1. Involved in the mkh1 signal transduction pathway that plays a role in cell wall integrity. Activates spm1/pmk1 via phosphorylation. This Schizosaccharomyces pombe (strain 972 / ATCC 24843) (Fission yeast) protein is MAP kinase kinase skh1/pek1 (skh1).